We begin with the raw amino-acid sequence, 314 residues long: D-alanine--D-alanine ligase (314 aa).

Residues 114–309 (KQLWRAHGLP…FDALVLRILD (196 aa)) form the ATP-grasp domain. 140–195 (IEALGLPLIVKPVHEGSTIGISIVETRDALIAAHAEASRFDSAIMAERFVQGEEYT) lines the ATP pocket. Aspartate 263, glutamate 276, and asparagine 278 together coordinate Mg(2+).

It belongs to the D-alanine--D-alanine ligase family. Mg(2+) serves as cofactor. The cofactor is Mn(2+).

The protein localises to the cytoplasm. The enzyme catalyses 2 D-alanine + ATP = D-alanyl-D-alanine + ADP + phosphate + H(+). It functions in the pathway cell wall biogenesis; peptidoglycan biosynthesis. In terms of biological role, cell wall formation. This Chromohalobacter salexigens (strain ATCC BAA-138 / DSM 3043 / CIP 106854 / NCIMB 13768 / 1H11) protein is D-alanine--D-alanine ligase.